The chain runs to 438 residues: Coenzyme A disulfide reductase (438 aa).

An FAD-binding site is contributed by 8–33; it reads GAVAGGATCASQIRRLDKESDIIIFE. Substrate contacts are provided by Thr15, Gln19, Arg22, Ser39, and Asn42. Catalysis depends on Cys43, which acts as the Nucleophile. The active-site Redox-active is Cys43. A substrate-binding site is contributed by Lys71. Position 151 to 166 (151 to 166) interacts with NADP(+); the sequence is VLVVGAGYVSLEVLEN. Residue 267–277 participates in FAD binding; it reads TNVPNIYVIGD. A substrate-binding site is contributed by His299. Tyr419 provides a ligand contact to FAD. Residue Lys427 participates in substrate binding.

The protein belongs to the class-III pyridine nucleotide-disulfide oxidoreductase family. Homodimer. The cofactor is FAD.

The catalysed reaction is NADP(+) + 2 CoA = CoA-disulfide + NADPH + H(+). Catalyzes specifically the NADPH-dependent reduction of coenzyme A disulfide. This chain is Coenzyme A disulfide reductase, found in Staphylococcus aureus (strain MRSA252).